The following is a 209-amino-acid chain: uncharacterized protein (209 aa).

Positions 13-75 form a coiled coil; that stretch reads LSAVDKQMDT…AINLAAVMTD (63 aa). The disordered stretch occupies residues 107 to 135; that stretch reads ATPLPSSNTNNEQSMSTYSSSISGKTSET. A compositionally biased stretch (polar residues) spans 110–119; it reads LPSSNTNNEQ. Positions 120 to 133 are enriched in low complexity; that stretch reads SMSTYSSSISGKTS.

Belongs to the asfivirus K205R family.

The protein resides in the host cytoplasm. In terms of biological role, induces host endoplasmic reticulum stress and consequently activates autophagy and NF-kappa-B signaling pathway. In turn, may induce autophagy-mediated STING1 degradation and innate immune evasion. This is an uncharacterized protein from Ornithodoros (relapsing fever ticks).